The sequence spans 547 residues: Chaperonin GroEL 3 (547 aa).

Residues 30–33 (TLGP), Lys51, 87–91 (DGTTT), Gly415, and Asp496 each bind ATP.

This sequence belongs to the chaperonin (HSP60) family. Forms a cylinder of 14 subunits composed of two heptameric rings stacked back-to-back. Interacts with the co-chaperonin GroES.

Its subcellular location is the cytoplasm. The catalysed reaction is ATP + H2O + a folded polypeptide = ADP + phosphate + an unfolded polypeptide.. Together with its co-chaperonin GroES, plays an essential role in assisting protein folding. The GroEL-GroES system forms a nano-cage that allows encapsulation of the non-native substrate proteins and provides a physical environment optimized to promote and accelerate protein folding. This Bradyrhizobium sp. (strain ORS 278) protein is Chaperonin GroEL 3.